The chain runs to 55 residues: uncharacterized protein (55 aa).

The first 19 residues, 1–19 (MQILLVVRLVLLWLGGLSA), serve as a signal peptide directing secretion.

This is an uncharacterized protein from Orgyia pseudotsugata multicapsid polyhedrosis virus (OpMNPV).